The following is a 2035-amino-acid chain: MFSKKPHGDVKKSTQKVLDTKKDALTRLKHLRIVIENAESIDLKQFFDQHFSHIYYVFFENFVTIEASLKQKGHKSQREELDAILFIFEKILQLLPERIHQRWQFHSIGLILKKLLHTGNSLKIRREGVRLFLLWLQALQDNCSKEQLWMFSCLIPGFSAPQSEYGPRTLDNLINPPLSLQETQVTIEEVTPLVPPQSGDKGQEDLTSYFLEALLKYIVIQVKSLEWKNKENQERGFSFLFSHFKKFYLPYIFPNICKENSLYHPVLDIPQIRPKPHYVMIKKDAETNETIYCTKEPFIQARVIVIRWLVSFWLEPKPHSGPNIPGMEGEVLPKNIQRAAASLVSREESKNDTVDKVDKSAEPEQSHSNTSTLTEREPSSSSLCSIDEEHLTDIEIVRRVFSSKRSNVNFVTEIFRQAFLLPICEAAAMRKVVKVYQEWIQQEEKPLFMQEPEDTAITCSDIPCSETVADHDSAIEDGEKREEENGTSTSEHVRNSSWTKNGSYQEAFHVCEEATEQNIQAGTQAVLQVFIINSSNIFLLEPANEIKNLLDEHTDMCKRILNIYRYMVVQVSMDKKTWEQMLLVLLRVTESVLKMSSQAFLQFQGKKSMTLAGRLAGPLFQTLIVAWIKANLNVYISRELWDDLLSVLSSLTYWEELATEWSLTMETLTKVLARNLYSLDLSDLPLDKLSEQKQKKHKGKGVGHEFQKVSVDKSFSRGWSRDQPGQAPMRQRSATTTGSPGTEKARSIVRQKTVDIDDAQILPRSTRVRHFSQSEDTGNEVFGALHEEQPLPRSSSTSDILEPFTVERAKVNKEDTSPKLPPLNSETGGNSANVPDLMDEFIAERLRSGNASTMTRRGSSPGSLEIPKDLPDILNKQNQMRPVDDPGVPSEWTSPASAGSSDLMSSDSHSDSFSAFQCEGRKFDNFGFGTDIGIPSSADVDLGSGHHQSTEEQEVASLTTLHLDSETSSLNQQAFSAEVATVTGSESASPVHSALGSRSQTPSPSTLSRAHIEQKDLQLDEKLHHSVLQTPDDLEISEFPSECCSVMAGGTLTGWHADVATVMWRRMLGILGDVNAIMDPEIHAQVFDYLCELWQNLAKIRDNLGISADNLTSPSPPVLIPPLRILTPWLFKATMLTDKYKQGKLHAYKLICNTMKRRQDVSPNRDFLTHFYNIMHCGLLHIDQDIVNTIIKHCSPQFFSLGLPGATMLIMDFIIAAGRVASSAFLNAPRVEAQVLLGSLVCFPNLYCELPALHPNIPDIAVSQFTDVKELIIKTVLSSARDEPSGPARCVALCSLGIWICEELVHESHHPQIKEALNVICVSLKFTNKTVAHVACNMLHMLVHYVPRLQIHQPQSPLKIIQILIATITHLLPSTEASSYEMDKRLVVSLLLCLLDWIMALPLKTLLQPVHATGAENDKTEKSVLNCIYKVLHGCVYGAQSFSNPKYFPISLSDLASVDYDPFMHLESLKEPEPLHSPDSERSSKLQPVTEVKTQMQQGLISIAARTVITHLVNHLGHYPMSGGPAMLTSQVCENHDNHYSESTELSPELFESPNIQFFVLNNTTLVSCIQIRSEESMPGGGLAAGLVSANSNVRIIVRDLSGKYSWDSAILYGPPIVSGLPEPTSFILSMSDQEKPEEPPTSNECLEDIAVKDGLSLQLRRFRETVPTWSTIREEEDVLDELLQYLGTTSPECLQRTGISLNVPAPQPLCISEKQENDVINAILKQYTEEKEFVEKHFNDLNMKASEQDEPTPQKPQSAFYYCRLLLSILGMNSWDKRRSFHLLKKNEKLLRELRNLDSRQCRETHKIAVFYVAEGQEDKYSILTNIGGSQAYEDFVAGLGWEVNLTNHCGFMGGLQKNRSTGLTTPYFATSTVEVIFHVSTRMPSDSDDSLTKKLRHLGNDEVHIVWSEHTRDYRRGIIPTEFGDVLIVIYPMKNHMFSIQIMKKPEVPFFGPLFDGAIVNGKVLPIMVRSTAINASRALKSLIPLYQNFYEERARYLQTIVQHHLEPTTFEDFAAQVFSPAPYHHFPADADH.

2 disordered regions span residues 343-384 (LVSR…SSLC) and 477-496 (DGEK…VRNS). Over residues 345–365 (SREESKNDTVDKVDKSAEPEQ) the composition is skewed to basic and acidic residues. Polar residues-rich tracts occupy residues 366–384 (SHSN…SSLC) and 486–496 (GTSTSEHVRNS). A phosphoserine mark is found at Ser-710 and Ser-720. The segment at 714 to 752 (SFSRGWSRDQPGQAPMRQRSATTTGSPGTEKARSIVRQK) is disordered. At Thr-753 the chain carries Phosphothreonine. Ser-772 bears the Phosphoserine mark. Thr-777 is modified (phosphothreonine). Ser-796 carries the phosphoserine modification. The span at 807–817 (ERAKVNKEDTS) shows a compositional bias: basic and acidic residues. Disordered regions lie at residues 807–834 (ERAK…SANV) and 848–911 (SGNA…SHSD). Polar residues-rich tracts occupy residues 824–833 (NSETGGNSAN) and 849–862 (GNAS…SSPG). A phosphoserine mark is found at Ser-859, Ser-860, and Ser-863. The span at 894–911 (SPASAGSSDLMSSDSHSD) shows a compositional bias: low complexity. Phosphoserine occurs at positions 985, 989, 993, and 999. The span at 986–1008 (ESASPVHSALGSRSQTPSPSTLS) shows a compositional bias: polar residues. The segment at 986–1011 (ESASPVHSALGSRSQTPSPSTLSRAH) is disordered. The residue at position 1001 (Thr-1001) is a Phosphothreonine. A phosphoserine mark is found at Ser-1003 and Ser-1477. Positions 1326–2035 (FTNKTVAHVA…YHHFPADADH (710 aa)) are minimal domain that binds to TCF3/E12. A coiled-coil region spans residues 1713 to 1748 (SEKQENDVINAILKQYTEEKEFVEKHFNDLNMKASE). One can recognise a Rap-GAP domain in the interval 1795 to 2003 (LRNLDSRQCR…EERARYLQTI (209 aa)).

In terms of assembly, component of the heterodimeric RalGAP1 complex with RALGAPB. Heterodimerization is required for activity. Interacts with the HLH region of TCF3/isoform E12. As to expression, expressed during embryogenesis. Expressed in the adult brain, particularly in neurons of the cortex and hippocampus.

It localises to the cytoplasm. The protein resides in the nucleus. Functionally, catalytic subunit of the heterodimeric RalGAP1 complex which acts as a GTPase activator for the Ras-like small GTPases RALA and RALB. May interact with the HLH region of TCF3/isoform E12. This chain is Ral GTPase-activating protein subunit alpha-1 (Ralgapa1), found in Mus musculus (Mouse).